A 310-amino-acid polypeptide reads, in one-letter code: Dopamine receptor-interacting protein 1 (310 aa).

In terms of assembly, interacts with DRD1.

Its function is as follows. Could be a regulator of the dopamine receptor signaling pathway. The polypeptide is Dopamine receptor-interacting protein 1 (Homo sapiens (Human)).